Consider the following 31-residue polypeptide: Cytochrome b6-f complex subunit 6 (31 aa).

The helical transmembrane segment at 4–24 (ITSYFGFLLAALTITSALFIG) threads the bilayer.

The protein belongs to the PetL family. As to quaternary structure, the 4 large subunits of the cytochrome b6-f complex are cytochrome b6, subunit IV (17 kDa polypeptide, PetD), cytochrome f and the Rieske protein, while the 4 small subunits are PetG, PetL, PetM and PetN. The complex functions as a dimer.

The protein localises to the plastid. It localises to the chloroplast thylakoid membrane. Its function is as follows. Component of the cytochrome b6-f complex, which mediates electron transfer between photosystem II (PSII) and photosystem I (PSI), cyclic electron flow around PSI, and state transitions. PetL is important for photoautotrophic growth as well as for electron transfer efficiency and stability of the cytochrome b6-f complex. This Hamamelis virginiana (Witch-hazel) protein is Cytochrome b6-f complex subunit 6.